The following is a 303-amino-acid chain: Signal recognition particle receptor FtsY (303 aa).

Residues 108-115 (GVNGAGKT), 190-194 (DTAGR), and 254-257 (TKLD) contribute to the GTP site.

Belongs to the GTP-binding SRP family. FtsY subfamily. In terms of assembly, part of the signal recognition particle protein translocation system, which is composed of SRP and FtsY. SRP is a ribonucleoprotein composed of Ffh and a 4.5S RNA molecule.

The protein resides in the cell inner membrane. Its subcellular location is the cytoplasm. It carries out the reaction GTP + H2O = GDP + phosphate + H(+). Involved in targeting and insertion of nascent membrane proteins into the cytoplasmic membrane. Acts as a receptor for the complex formed by the signal recognition particle (SRP) and the ribosome-nascent chain (RNC). Interaction with SRP-RNC leads to the transfer of the RNC complex to the Sec translocase for insertion into the membrane, the hydrolysis of GTP by both Ffh and FtsY, and the dissociation of the SRP-FtsY complex into the individual components. The protein is Signal recognition particle receptor FtsY of Rickettsia conorii (strain ATCC VR-613 / Malish 7).